The sequence spans 213 residues: Pyridoxine/pyridoxamine 5'-phosphate oxidase (213 aa).

Substrate-binding positions include 8-11 (RREY) and K67. FMN is bound by residues 62 to 67 (RIVLLK), 77 to 78 (FT), R83, K84, and Q106. Residues Y124, R128, and S132 each contribute to the substrate site. FMN is bound by residues 141–142 (QS) and W186. 192-194 (RLH) serves as a coordination point for substrate. R196 provides a ligand contact to FMN.

The protein belongs to the pyridoxamine 5'-phosphate oxidase family. As to quaternary structure, homodimer. FMN is required as a cofactor.

It carries out the reaction pyridoxamine 5'-phosphate + O2 + H2O = pyridoxal 5'-phosphate + H2O2 + NH4(+). The catalysed reaction is pyridoxine 5'-phosphate + O2 = pyridoxal 5'-phosphate + H2O2. The protein operates within cofactor metabolism; pyridoxal 5'-phosphate salvage; pyridoxal 5'-phosphate from pyridoxamine 5'-phosphate: step 1/1. It functions in the pathway cofactor metabolism; pyridoxal 5'-phosphate salvage; pyridoxal 5'-phosphate from pyridoxine 5'-phosphate: step 1/1. Catalyzes the oxidation of either pyridoxine 5'-phosphate (PNP) or pyridoxamine 5'-phosphate (PMP) into pyridoxal 5'-phosphate (PLP). This chain is Pyridoxine/pyridoxamine 5'-phosphate oxidase, found in Shewanella sediminis (strain HAW-EB3).